We begin with the raw amino-acid sequence, 333 residues long: NADH dehydrogenase (ubiquinone) complex I, assembly factor 6 (333 aa).

The transit peptide at 1–44 (MATSMLGSVRGPRPFGLANLFHRQPPRDAWERVRRLPGPSAVRR) directs the protein to the mitochondrion.

Belongs to the NDUFAF6 family.

Its subcellular location is the mitochondrion inner membrane. Its function is as follows. Involved in the assembly of mitochondrial NADH:ubiquinone oxidoreductase complex (complex I) at early stages. May play a role in the biogenesis of complex I subunit MT-ND1. The chain is NADH dehydrogenase (ubiquinone) complex I, assembly factor 6 (Ndufaf6) from Mus musculus (Mouse).